Consider the following 262-residue polypeptide: Large ribosomal subunit protein eL8B (262 aa).

Residues 1–36 are disordered; the sequence is MAPKGKKVAPAPLATKSAKSSESKNPLFESTPKNFG.

It belongs to the eukaryotic ribosomal protein eL8 family. As to quaternary structure, component of the large ribosomal subunit. Mature ribosomes consist of a small (40S) and a large (60S) subunit. The 40S subunit contains about 32 different proteins and 1 molecule of RNA (18S). The 60S subunit contains 45 different proteins and 3 molecules of RNA (25S, 5.8S and 5S).

It localises to the cytoplasm. Functionally, component of the ribosome, a large ribonucleoprotein complex responsible for the synthesis of proteins in the cell. The small ribosomal subunit (SSU) binds messenger RNAs (mRNAs) and translates the encoded message by selecting cognate aminoacyl-transfer RNA (tRNA) molecules. The large subunit (LSU) contains the ribosomal catalytic site termed the peptidyl transferase center (PTC), which catalyzes the formation of peptide bonds, thereby polymerizing the amino acids delivered by tRNAs into a polypeptide chain. The nascent polypeptides leave the ribosome through a tunnel in the LSU and interact with protein factors that function in enzymatic processing, targeting, and the membrane insertion of nascent chains at the exit of the ribosomal tunnel. The polypeptide is Large ribosomal subunit protein eL8B (Candida albicans (strain SC5314 / ATCC MYA-2876) (Yeast)).